A 1342-amino-acid chain; its full sequence is DNA-directed RNA polymerase subunit beta (1342 aa).

This sequence belongs to the RNA polymerase beta chain family. In terms of assembly, the RNAP catalytic core consists of 2 alpha, 1 beta, 1 beta' and 1 omega subunit. When a sigma factor is associated with the core the holoenzyme is formed, which can initiate transcription.

It catalyses the reaction RNA(n) + a ribonucleoside 5'-triphosphate = RNA(n+1) + diphosphate. DNA-dependent RNA polymerase catalyzes the transcription of DNA into RNA using the four ribonucleoside triphosphates as substrates. This Tolumonas auensis (strain DSM 9187 / NBRC 110442 / TA 4) protein is DNA-directed RNA polymerase subunit beta.